The chain runs to 298 residues: Pyridoxal kinase PdxY (298 aa).

S17 provides a ligand contact to substrate. D119 and E156 together coordinate ATP. Residue D234 participates in substrate binding.

The protein belongs to the pyridoxine kinase family. PdxY subfamily. As to quaternary structure, homodimer. Mg(2+) is required as a cofactor.

The enzyme catalyses pyridoxal + ATP = pyridoxal 5'-phosphate + ADP + H(+). The protein operates within cofactor metabolism; pyridoxal 5'-phosphate salvage; pyridoxal 5'-phosphate from pyridoxal: step 1/1. Pyridoxal kinase involved in the salvage pathway of pyridoxal 5'-phosphate (PLP). Catalyzes the phosphorylation of pyridoxal to PLP. This chain is Pyridoxal kinase PdxY, found in Deinococcus radiodurans (strain ATCC 13939 / DSM 20539 / JCM 16871 / CCUG 27074 / LMG 4051 / NBRC 15346 / NCIMB 9279 / VKM B-1422 / R1).